Here is a 1077-residue protein sequence, read N- to C-terminus: Histone deacetylase 4 (1077 aa).

Residues 66 to 169 (REQQLQQELL…GKESAVASTE (104 aa)) adopt a coiled-coil conformation. The segment at 117–312 (MLAMKHQQEL…NSSSGNVSTE (196 aa)) is interaction with MEF2A. The span at 132–162 (KLERHRQEQELEKQHREQKLQQLKNKEKGKE) shows a compositional bias: basic and acidic residues. 3 disordered regions span residues 132–167 (KLER…AVAS), 204–225 (KTQH…ASYN), and 239–327 (PLRK…AETS). Residues 205-224 (TQHSSLDQSSPPQSGVSASY) show a composition bias toward polar residues. The residue at position 209 (Ser-209) is a Phosphoserine. A Phosphoserine; by CaMK4 and SIK1 modification is found at Ser-245. The segment covering 258-273 (KVAERRSSPLLRRKDG) has biased composition (basic and acidic residues). Positions 289–310 (SACSSAPGSGPSSPNSSSGNVS) are enriched in low complexity. A PxLPxI/L motif; mediates interaction with ANKRA2 and 14-3-3 proteins motif is present at residues 348-353 (PSLPNI). A Phosphoserine modification is found at Ser-349. Position 466 is a phosphoserine; by CaMK4 and SIK1 (Ser-466). 3 disordered regions span residues 508-530 (SKPS…ELRE), 542-582 (RLPG…RPAT), and 623-646 (RPLS…EPPT). Positions 515 to 530 (RQPESHPEETEEELRE) are enriched in basic and acidic residues. A Glycyl lysine isopeptide (Lys-Gly) (interchain with G-Cter in SUMO) cross-link involves residue Lys-557. 3 positions are modified to phosphoserine: Ser-563, Ser-630, and Ser-631. The span at 627 to 639 (RAQSSPASATFPM) shows a compositional bias: polar residues. A histone deacetylase region spans residues 653-1077 (GLVYDTLMLK…EEPMEEEPPL (425 aa)). Residues Cys-665, Cys-667, His-673, and Cys-744 each contribute to the Zn(2+) site. His-796 is an active-site residue. Positions 1044–1077 (EEAETVTAMASLSVGVKPAEKRSEEEPMEEEPPL) match the Nuclear export signal motif. Positions 1052–1077 (MASLSVGVKPAEKRSEEEPMEEEPPL) are disordered.

This sequence belongs to the histone deacetylase family. HD type 2 subfamily. In terms of assembly, homodimer. Homodimerization via its N-terminal domain. Interacts with HDAC7. Interacts with MEF2A, MEF2C, MEF2D, MORC2 and NR2C1. Interacts with a 14-3-3 chaperone proteins in a phosphorylation dependent manner. Interacts with 14-3-3 protein YWHAB. Interacts with KDM5B and AHRR. Interacts with BTBD14B. Interacts with MYOCD. Interacts (via PxLPxI/L motif) with ANKRA2 (via ankyrin repeats). Interacts with CUL7 (as part of the 3M complex); negatively regulated by ANKRA2. Interacts with EP300 in the presence of TFAP2C. Interacts with HSPA1A and HSPA1B leading to their deacetylation at 'Lys-77'. Interacts with ZBTB7B; the interaction allows the recruitment of HDAC4 on CD8 loci for deacetylation and possible inhibition of CD8 genes expression. Interacts with DHX36. Interacts with SIK3; this interaction leads to HDAC4 retention in the cytoplasm. In terms of processing, phosphorylated by CaMK4 at Ser-245, Ser-466 and Ser-630. Phosphorylation at other residues by CaMK2D is required for the interaction with 14-3-3. Phosphorylation at Ser-349, within the PxLPxI/L motif, impairs the binding of ANKRA2 but generates a high-affinity docking site for 14-3-3. Sumoylation on Lys-557 is promoted by the E3 SUMO-protein ligase RANBP2, and prevented by phosphorylation by CaMK4.

The protein localises to the nucleus. It localises to the cytoplasm. The catalysed reaction is N(6)-acetyl-L-lysyl-[histone] + H2O = L-lysyl-[histone] + acetate. Functionally, responsible for the deacetylation of lysine residues on the N-terminal part of the core histones (H2A, H2B, H3 and H4). Histone deacetylation gives a tag for epigenetic repression and plays an important role in transcriptional regulation, cell cycle progression and developmental events. Histone deacetylases act via the formation of large multiprotein complexes. Involved in muscle maturation via its interaction with the myocyte enhancer factors such as MEF2A, MEF2C and MEF2D. Deacetylates HSPA1A and HSPA1B at 'Lys-77' leading to their preferential binding to co-chaperone STUB1. This chain is Histone deacetylase 4 (Hdac4), found in Rattus norvegicus (Rat).